We begin with the raw amino-acid sequence, 245 residues long: Tryptophan synthase alpha chain (245 aa).

Residues Glu-37 and Asp-48 each act as proton acceptor in the active site.

This sequence belongs to the TrpA family. Tetramer of two alpha and two beta chains.

It catalyses the reaction (1S,2R)-1-C-(indol-3-yl)glycerol 3-phosphate + L-serine = D-glyceraldehyde 3-phosphate + L-tryptophan + H2O. Its pathway is amino-acid biosynthesis; L-tryptophan biosynthesis; L-tryptophan from chorismate: step 5/5. Functionally, the alpha subunit is responsible for the aldol cleavage of indoleglycerol phosphate to indole and glyceraldehyde 3-phosphate. The polypeptide is Tryptophan synthase alpha chain (Saccharolobus solfataricus (strain ATCC 35092 / DSM 1617 / JCM 11322 / P2) (Sulfolobus solfataricus)).